A 218-amino-acid polypeptide reads, in one-letter code: UPF0598 protein C8orf82 homolog (218 aa).

Belongs to the UPF0598 family.

This is UPF0598 protein C8orf82 homolog from Bos taurus (Bovine).